Here is a 482-residue protein sequence, read N- to C-terminus: Chromosomal replication initiator protein DnaA (482 aa).

A domain I, interacts with DnaA modulators region spans residues 1–71 (MKQSILFERV…TGLFQAEDPE (71 aa)). The domain II stretch occupies residues 71–139 (EILKIEVLVR…ASFGSPLFGS (69 aa)). The tract at residues 140 to 362 (PLDSRFTFDT…GAFNQLVFRR (223 aa)) is domain III, AAA+ region. Residues glycine 186, glycine 188, lysine 189, and threonine 190 each coordinate ATP. Residues 363 to 482 (SFEPNLSIER…VELLKRLINE (120 aa)) are domain IV, binds dsDNA.

Belongs to the DnaA family. As to quaternary structure, oligomerizes as a right-handed, spiral filament on DNA at oriC.

It localises to the cytoplasm. Its function is as follows. Plays an essential role in the initiation and regulation of chromosomal replication. ATP-DnaA binds to the origin of replication (oriC) to initiate formation of the DNA replication initiation complex once per cell cycle. Binds the DnaA box (a 9 base pair repeat at the origin) and separates the double-stranded (ds)DNA. Forms a right-handed helical filament on oriC DNA; dsDNA binds to the exterior of the filament while single-stranded (ss)DNA is stabiized in the filament's interior. The ATP-DnaA-oriC complex binds and stabilizes one strand of the AT-rich DNA unwinding element (DUE), permitting loading of DNA polymerase. After initiation quickly degrades to an ADP-DnaA complex that is not apt for DNA replication. Binds acidic phospholipids. The polypeptide is Chromosomal replication initiator protein DnaA (Rhizobium johnstonii (strain DSM 114642 / LMG 32736 / 3841) (Rhizobium leguminosarum bv. viciae)).